Consider the following 305-residue polypeptide: Elongation factor Ts (305 aa).

The tract at residues 81–84 is involved in Mg(2+) ion dislocation from EF-Tu; that stretch reads TDFV.

This sequence belongs to the EF-Ts family.

The protein localises to the cytoplasm. Functionally, associates with the EF-Tu.GDP complex and induces the exchange of GDP to GTP. It remains bound to the aminoacyl-tRNA.EF-Tu.GTP complex up to the GTP hydrolysis stage on the ribosome. This chain is Elongation factor Ts, found in Nitratiruptor sp. (strain SB155-2).